The chain runs to 201 residues: Phosphoheptose isomerase (201 aa).

An SIS domain is found at Ile-36–Ala-195. Residue Asn-51 to Gly-53 coordinates substrate. The Zn(2+) site is built by His-60 and Glu-64. Substrate contacts are provided by residues Glu-64, Asn-93–Asp-94, Ser-119–Ser-121, Ser-124, and Gln-171. The Zn(2+) site is built by Gln-171 and His-179.

This sequence belongs to the SIS family. GmhA subfamily. Zn(2+) is required as a cofactor.

The protein resides in the cytoplasm. The enzyme catalyses 2 D-sedoheptulose 7-phosphate = D-glycero-alpha-D-manno-heptose 7-phosphate + D-glycero-beta-D-manno-heptose 7-phosphate. It participates in carbohydrate biosynthesis; D-glycero-D-manno-heptose 7-phosphate biosynthesis; D-glycero-alpha-D-manno-heptose 7-phosphate and D-glycero-beta-D-manno-heptose 7-phosphate from sedoheptulose 7-phosphate: step 1/1. Functionally, catalyzes the isomerization of sedoheptulose 7-phosphate in D-glycero-D-manno-heptose 7-phosphate. This is Phosphoheptose isomerase from Thermodesulfovibrio yellowstonii (strain ATCC 51303 / DSM 11347 / YP87).